Here is a 382-residue protein sequence, read N- to C-terminus: uncharacterized protein (382 aa).

12 consecutive transmembrane segments (helical) span residues 8–28 (VMLL…LNTL), 45–65 (MVSS…GYLI), 75–95 (YLAS…VGFW), 102–122 (FIAG…LMCS), 131–151 (LLAA…LLVS), 157–177 (LLHV…PLLF), 204–224 (LGVN…GLMP), 231–251 (GMAN…GILG), 270–290 (VQVF…AMAP), 291–311 (ALFI…AWAC), 325–345 (ALLL…AMLM), and 349–369 (SDNL…LMLL).

It belongs to the major facilitator superfamily. YcaD (TC 2.A.1.26) family.

The protein resides in the cell inner membrane. This is an uncharacterized protein from Salmonella agona (strain SL483).